The chain runs to 294 residues: Protoheme IX farnesyltransferase (294 aa).

9 helical membrane-spanning segments follow: residues 25–45 (SLVL…MGAV), 48–68 (LVTL…NCYW), 92–112 (AVAL…LALG), 115–135 (VLTA…YTPL), 141–161 (AAML…WTAV), 170–190 (FSLF…IALF), 216–236 (VVLY…LHIA), 240–260 (YLAA…WGFF), and 272–292 (FFFS…DRVP).

The protein belongs to the UbiA prenyltransferase family. Protoheme IX farnesyltransferase subfamily.

The protein localises to the cell inner membrane. It catalyses the reaction heme b + (2E,6E)-farnesyl diphosphate + H2O = Fe(II)-heme o + diphosphate. It participates in porphyrin-containing compound metabolism; heme O biosynthesis; heme O from protoheme: step 1/1. In terms of biological role, converts heme B (protoheme IX) to heme O by substitution of the vinyl group on carbon 2 of heme B porphyrin ring with a hydroxyethyl farnesyl side group. The chain is Protoheme IX farnesyltransferase from Myxococcus xanthus (strain DK1622).